Consider the following 684-residue polypeptide: 77 kDa membrane protein (684 aa).

Positions 1 to 30 (MKFKSLITTTLALGVLASTGANFNNNEASA) are cleaved as a signal peptide. MAP repeat units follow at residues 45–154 (GYSK…EDKK), 156–265 (DKAN…ENKA), 266–374 (KRNY…KADR), 375–474 (YVPY…TGTK), 475–584 (AKAD…KKNN), and 586–684 (SNNV…ELKF).

The protein resides in the cell membrane. In terms of biological role, binds various plasma and ECM-proteins. This is 77 kDa membrane protein from Staphylococcus aureus (strain COL).